The following is a 261-amino-acid chain: Cytochrome c oxidase subunit 3 (261 aa).

Over 1-15 the chain is Mitochondrial matrix; it reads MTHQTHAYHMVNPSP. A helical membrane pass occupies residues 16-34; sequence WPLTGALSALLMTSGLIMW. At 35–40 the chain is on the mitochondrial intermembrane side; sequence FHFNST. The helical transmembrane segment at 41 to 66 threads the bilayer; it reads TLLMLGLTTNMLTMYQWWRDVVREST. Topologically, residues 67–72 are mitochondrial matrix; it reads FQGHHT. A helical membrane pass occupies residues 73-105; the sequence is PNVQKGLRYGMILFIISEVLFFTGFFWAFYHSS. The Mitochondrial intermembrane segment spans residues 106-128; the sequence is LAPTPELGGCWPPTGIHPLNPLE. The helical transmembrane segment at 129–152 threads the bilayer; it reads VPLLNTSVLLASGVSITWAHHSLM. At 153 to 155 the chain is on the mitochondrial matrix side; that stretch reads EGN. The helical transmembrane segment at 156–183 threads the bilayer; it reads RNHMLQALFITIALGVYFTLLQASEYYE. At 184–190 the chain is on the mitochondrial intermembrane side; that stretch reads APFTISD. The helical transmembrane segment at 191-223 threads the bilayer; it reads GVYGSTFFVATGFHGLHVIIGSTFLIVCFFRQL. The Mitochondrial matrix portion of the chain corresponds to 224–232; that stretch reads KFHFTSSHH. A helical transmembrane segment spans residues 233–256; the sequence is FGFEAAAWYWHFVDVVWLFLYVSI. Residues 257-261 lie on the Mitochondrial intermembrane side of the membrane; the sequence is YWWGS.

It belongs to the cytochrome c oxidase subunit 3 family. As to quaternary structure, component of the cytochrome c oxidase (complex IV, CIV), a multisubunit enzyme composed of 14 subunits. The complex is composed of a catalytic core of 3 subunits MT-CO1, MT-CO2 and MT-CO3, encoded in the mitochondrial DNA, and 11 supernumerary subunits COX4I, COX5A, COX5B, COX6A, COX6B, COX6C, COX7A, COX7B, COX7C, COX8 and NDUFA4, which are encoded in the nuclear genome. The complex exists as a monomer or a dimer and forms supercomplexes (SCs) in the inner mitochondrial membrane with NADH-ubiquinone oxidoreductase (complex I, CI) and ubiquinol-cytochrome c oxidoreductase (cytochrome b-c1 complex, complex III, CIII), resulting in different assemblies (supercomplex SCI(1)III(2)IV(1) and megacomplex MCI(2)III(2)IV(2)).

The protein resides in the mitochondrion inner membrane. It carries out the reaction 4 Fe(II)-[cytochrome c] + O2 + 8 H(+)(in) = 4 Fe(III)-[cytochrome c] + 2 H2O + 4 H(+)(out). In terms of biological role, component of the cytochrome c oxidase, the last enzyme in the mitochondrial electron transport chain which drives oxidative phosphorylation. The respiratory chain contains 3 multisubunit complexes succinate dehydrogenase (complex II, CII), ubiquinol-cytochrome c oxidoreductase (cytochrome b-c1 complex, complex III, CIII) and cytochrome c oxidase (complex IV, CIV), that cooperate to transfer electrons derived from NADH and succinate to molecular oxygen, creating an electrochemical gradient over the inner membrane that drives transmembrane transport and the ATP synthase. Cytochrome c oxidase is the component of the respiratory chain that catalyzes the reduction of oxygen to water. Electrons originating from reduced cytochrome c in the intermembrane space (IMS) are transferred via the dinuclear copper A center (CU(A)) of subunit 2 and heme A of subunit 1 to the active site in subunit 1, a binuclear center (BNC) formed by heme A3 and copper B (CU(B)). The BNC reduces molecular oxygen to 2 water molecules using 4 electrons from cytochrome c in the IMS and 4 protons from the mitochondrial matrix. This is Cytochrome c oxidase subunit 3 (MT-CO3) from Gazella spekei (Speke's gazelle).